We begin with the raw amino-acid sequence, 434 residues long: Enolase (434 aa).

(2R)-2-phosphoglycerate is bound at residue Gln166. Glu208 (proton donor) is an active-site residue. Positions 245, 290, and 317 each coordinate Mg(2+). Residues Lys342, Arg371, Ser372, and Lys393 each contribute to the (2R)-2-phosphoglycerate site. The Proton acceptor role is filled by Lys342.

The protein belongs to the enolase family. Requires Mg(2+) as cofactor.

The protein resides in the cytoplasm. The protein localises to the secreted. It localises to the cell surface. The enzyme catalyses (2R)-2-phosphoglycerate = phosphoenolpyruvate + H2O. The protein operates within carbohydrate degradation; glycolysis; pyruvate from D-glyceraldehyde 3-phosphate: step 4/5. Its function is as follows. Catalyzes the reversible conversion of 2-phosphoglycerate (2-PG) into phosphoenolpyruvate (PEP). It is essential for the degradation of carbohydrates via glycolysis. This chain is Enolase, found in Caldicellulosiruptor saccharolyticus (strain ATCC 43494 / DSM 8903 / Tp8T 6331).